We begin with the raw amino-acid sequence, 291 residues long: Formamidopyrimidine-DNA glycosylase (291 aa).

Proline 2 functions as the Schiff-base intermediate with DNA in the catalytic mechanism. Glutamate 3 functions as the Proton donor in the catalytic mechanism. The active-site Proton donor; for beta-elimination activity is the lysine 58. Positions 100, 123, and 166 each coordinate DNA. An FPG-type zinc finger spans residues 257-291 (SVYGREGKECSRCGMHIVRIVQSGRSSFYCPQCQK). Catalysis depends on arginine 281, which acts as the Proton donor; for delta-elimination activity.

The protein belongs to the FPG family. In terms of assembly, monomer. Zn(2+) is required as a cofactor.

The enzyme catalyses Hydrolysis of DNA containing ring-opened 7-methylguanine residues, releasing 2,6-diamino-4-hydroxy-5-(N-methyl)formamidopyrimidine.. The catalysed reaction is 2'-deoxyribonucleotide-(2'-deoxyribose 5'-phosphate)-2'-deoxyribonucleotide-DNA = a 3'-end 2'-deoxyribonucleotide-(2,3-dehydro-2,3-deoxyribose 5'-phosphate)-DNA + a 5'-end 5'-phospho-2'-deoxyribonucleoside-DNA + H(+). In terms of biological role, involved in base excision repair of DNA damaged by oxidation or by mutagenic agents. Acts as a DNA glycosylase that recognizes and removes damaged bases. Has a preference for oxidized purines, such as 7,8-dihydro-8-oxoguanine (8-oxoG). Has AP (apurinic/apyrimidinic) lyase activity and introduces nicks in the DNA strand. Cleaves the DNA backbone by beta-delta elimination to generate a single-strand break at the site of the removed base with both 3'- and 5'-phosphates. This Bartonella bacilliformis (strain ATCC 35685 / KC583 / Herrer 020/F12,63) protein is Formamidopyrimidine-DNA glycosylase.